The primary structure comprises 312 residues: MTKKLKVAIVGSGNIGTDLMIKILRHGQHLEMGALVGIDPNSDGLARAARLGVATTAEGVEGLARLPGFGEIDFVFDATSAGAHVRNEAFLRALKPGLRLIDLTPAAIGPYCVPVVNLEQNLHETNVNMVTCGGQATIPMVAAVSRVARVHYAEIVASIASRSAGPGTRANIDEFTETTSKAIEAIGGARKGKAIIVLNPAEPPLIMRDTVYVLSAPADRARVEASLAEMAQAVQGYVPGYRLKQRVQFDEIPDAAPLNIPGLGRLSGLKTSVFLEVEGAAHYLPAYAGNLDIMTSAALATAERMAQSMLNA.

Serine 12 to isoleucine 15 is a binding site for NAD(+). Cysteine 132 acts as the Acyl-thioester intermediate in catalysis. NAD(+)-binding positions include serine 163 to asparagine 171 and asparagine 290.

This sequence belongs to the acetaldehyde dehydrogenase family.

It carries out the reaction acetaldehyde + NAD(+) + CoA = acetyl-CoA + NADH + H(+). The sequence is that of Acetaldehyde dehydrogenase 4 from Azotobacter vinelandii (strain DJ / ATCC BAA-1303).